The following is a 342-amino-acid chain: Phosphate acyltransferase (342 aa).

It belongs to the PlsX family. As to quaternary structure, homodimer. Probably interacts with PlsY.

The protein localises to the cytoplasm. The enzyme catalyses a fatty acyl-[ACP] + phosphate = an acyl phosphate + holo-[ACP]. It participates in lipid metabolism; phospholipid metabolism. Catalyzes the reversible formation of acyl-phosphate (acyl-PO(4)) from acyl-[acyl-carrier-protein] (acyl-ACP). This enzyme utilizes acyl-ACP as fatty acyl donor, but not acyl-CoA. The protein is Phosphate acyltransferase of Shewanella sediminis (strain HAW-EB3).